A 1576-amino-acid polypeptide reads, in one-letter code: Spermatogenesis-associated protein 31D1 (1576 aa).

The chain crosses the membrane as a helical span at residues 29–49 (FICLSGLGLFILYLFYVVLTL). 5 disordered regions span residues 170 to 197 (FTLASTPSATPPEDLILSPRPKASPPPP), 542 to 572 (HESPVLPPPQPLSLPSTQPLPLPQTLPQGQS), 782 to 801 (KDHLLHGPETSSDKDLRSNS), 952 to 1033 (SQGD…TDFQ), and 1293 to 1347 (RVSP…PPPE). Residues 546 to 565 (VLPPPQPLSLPSTQPLPLPQ) show a composition bias toward pro residues. The span at 966 to 980 (RSTFQGEKLGTTSSV) shows a compositional bias: polar residues. The segment covering 1004-1019 (QFSDTDHDLIETDSKD) has biased composition (basic and acidic residues). Residues 1020-1032 (GASTSLRRGTTDF) are compositionally biased toward polar residues.

Belongs to the SPATA31 family.

Its subcellular location is the membrane. Functionally, may play a role in spermatogenesis. In Homo sapiens (Human), this protein is Spermatogenesis-associated protein 31D1 (SPATA31D1).